The chain runs to 181 residues: ATP synthase subunit b (181 aa).

The chain crosses the membrane as a helical span at residues Leu-24–Val-44.

Belongs to the ATPase B chain family. F-type ATPases have 2 components, F(1) - the catalytic core - and F(0) - the membrane proton channel. F(1) has five subunits: alpha(3), beta(3), gamma(1), delta(1), epsilon(1). F(0) has three main subunits: a(1), b(2) and c(10-14). The alpha and beta chains form an alternating ring which encloses part of the gamma chain. F(1) is attached to F(0) by a central stalk formed by the gamma and epsilon chains, while a peripheral stalk is formed by the delta and b chains.

Its subcellular location is the cell membrane. Functionally, f(1)F(0) ATP synthase produces ATP from ADP in the presence of a proton or sodium gradient. F-type ATPases consist of two structural domains, F(1) containing the extramembraneous catalytic core and F(0) containing the membrane proton channel, linked together by a central stalk and a peripheral stalk. During catalysis, ATP synthesis in the catalytic domain of F(1) is coupled via a rotary mechanism of the central stalk subunits to proton translocation. Component of the F(0) channel, it forms part of the peripheral stalk, linking F(1) to F(0). The protein is ATP synthase subunit b of Mycoplasma mycoides subsp. mycoides SC (strain CCUG 32753 / NCTC 10114 / PG1).